Consider the following 311-residue polypeptide: 4-hydroxy-tetrahydrodipicolinate synthase (311 aa).

Thr-51 provides a ligand contact to pyruvate. Catalysis depends on Tyr-140, which acts as the Proton donor/acceptor. Lys-168 acts as the Schiff-base intermediate with substrate in catalysis. Ile-209 is a binding site for pyruvate.

Belongs to the DapA family. In terms of assembly, homotetramer; dimer of dimers.

It is found in the cytoplasm. The enzyme catalyses L-aspartate 4-semialdehyde + pyruvate = (2S,4S)-4-hydroxy-2,3,4,5-tetrahydrodipicolinate + H2O + H(+). It participates in amino-acid biosynthesis; L-lysine biosynthesis via DAP pathway; (S)-tetrahydrodipicolinate from L-aspartate: step 3/4. In terms of biological role, catalyzes the condensation of (S)-aspartate-beta-semialdehyde [(S)-ASA] and pyruvate to 4-hydroxy-tetrahydrodipicolinate (HTPA). The protein is 4-hydroxy-tetrahydrodipicolinate synthase of Streptococcus suis (strain 98HAH33).